We begin with the raw amino-acid sequence, 221 residues long: Charged multivesicular body protein 3 (221 aa).

The N-myristoyl glycine moiety is linked to residue G2. The stretch at 22–54 (KIRKEMRVIDRQIRDIQREEEKVKRSIKDAAKK) forms a coiled coil. Important for autoinhibitory function regions lie at residues 59–64 (VCIILA) and 168–169 (IL). The stretch at 144–221 (LEDTLEGMDD…MQSRLAALRS (78 aa)) forms a coiled coil. The segment at 181-221 (PSKVTDLPDPVAIGATAAPEEESEEEEEIEEMQSRLAALRS) is disordered. The segment covering 199 to 211 (PEEESEEEEEIEE) has biased composition (acidic residues). The MIT-interacting motif signature appears at 200–210 (EEESEEEEEIE). 2 interaction with STAMBP regions span residues 202-206 (ESEEE) and 220-221 (RS).

The protein belongs to the SNF7 family. Probable core component of the endosomal sorting required for transport complex III (ESCRT-III). ESCRT-III components are thought to multimerize to form a flat lattice on the perimeter membrane of the endosome. Several assembly forms of ESCRT-III may exist that interact and act sequentially.

The protein localises to the cytoplasm. The protein resides in the cytosol. It is found in the membrane. It localises to the endosome. Its subcellular location is the late endosome membrane. Its function is as follows. Probable core component of the endosomal sorting required for transport complex III (ESCRT-III) which is involved in multivesicular bodies (MVBs) formation and sorting of endosomal cargo proteins into MVBs. MVBs contain intraluminal vesicles (ILVs) that are generated by invagination and scission from the limiting membrane of the endosome and mostly are delivered to lysosomes enabling degradation of membrane proteins, such as stimulated growth factor receptors, lysosomal enzymes and lipids. Involved in late stages of cytokinesis. Plays a role in endosomal sorting/trafficking of EGF receptor. This chain is Charged multivesicular body protein 3 (chmp3), found in Danio rerio (Zebrafish).